Here is a 122-residue protein sequence, read N- to C-terminus: MARIAGVNIPTNKRLVIALQYIHGIGEKFAHKIIEKVGIPAERRVHELSDSEILQIRETIDRDYQVEGDLRREVAMSVKRLMDLGCYRGLRHRRSLPVRGQRTHTNARTRKGPARAIAGKKK.

Positions Pro97–Lys122 are disordered.

Belongs to the universal ribosomal protein uS13 family. As to quaternary structure, part of the 30S ribosomal subunit. Forms a loose heterodimer with protein S19. Forms two bridges to the 50S subunit in the 70S ribosome.

Its function is as follows. Located at the top of the head of the 30S subunit, it contacts several helices of the 16S rRNA. In the 70S ribosome it contacts the 23S rRNA (bridge B1a) and protein L5 of the 50S subunit (bridge B1b), connecting the 2 subunits; these bridges are implicated in subunit movement. Contacts the tRNAs in the A and P-sites. The polypeptide is Small ribosomal subunit protein uS13 (Bartonella bacilliformis (strain ATCC 35685 / KC583 / Herrer 020/F12,63)).